The primary structure comprises 231 residues: Protein HHL1, chloroplastic (231 aa).

Residues 1–39 (MEVSMSLNALTRLPLKNTGRFEEVGLARHSLFSSRTACR) constitute a chloroplast transit peptide. A helical membrane pass occupies residues 93-113 (YLWYPLSIIAGGTTAKIMVAA). The disordered stretch occupies residues 206-231 (SFGKLSSLNPGSDEKTEETSDEKAKA). Residues 217–231 (SDEKTEETSDEKAKA) show a composition bias toward basic and acidic residues.

Interacts with psbB, psbC and LQY1, but not with psbA or psbD.

The protein localises to the plastid. Its subcellular location is the chloroplast thylakoid membrane. Functionally, involved in photoprotection. Forms a complex with LQY1 that is involved in the repair and reassembly cycle of the PSII-LHCII supercomplex under high-light conditions. May function in guiding the release of psbC from PSII core monomers. This chain is Protein HHL1, chloroplastic, found in Arabidopsis thaliana (Mouse-ear cress).